Reading from the N-terminus, the 235-residue chain is Clathrin light chain A (235 aa).

Residues 1-32 (MAELDPFGAPAGAPGGPALGNGVAGAGEEDPA) are disordered. Gly residues predominate over residues 13-25 (APGGPALGNGVAG). The segment at 99-161 (VDRLQSEPES…QLQKTKANNR (63 aa)) is involved in binding clathrin heavy chain. Phosphoserine occurs at positions 104 and 193. K210 bears the N6-acetyllysine mark. S223 bears the Phosphoserine mark. An N6-acetyllysine modification is found at K229.

The protein belongs to the clathrin light chain family. As to quaternary structure, clathrin coats are formed from molecules containing 3 heavy chains and 3 light chains. Interacts with CALY; the interaction stimulates clathrin self-assembly and clathrin-mediated endocytosis. Interacts with CKAP5 and TACC3 forming the TACC3/ch-TOG/clathrin complex located at spindle inter-microtubules bridges; the complex implicates clathrin triskelions.

It is found in the cytoplasmic vesicle membrane. The protein resides in the membrane. The protein localises to the coated pit. Its subcellular location is the cytoplasm. It localises to the cytoskeleton. It is found in the spindle. In terms of biological role, clathrin is the major protein of the polyhedral coat of coated pits and vesicles. Acts as a component of the TACC3/ch-TOG/clathrin complex proposed to contribute to stabilization of kinetochore fibers of the mitotic spindle by acting as inter-microtubule bridge. The chain is Clathrin light chain A (Clta) from Mus musculus (Mouse).